A 262-amino-acid polypeptide reads, in one-letter code: Expansin-A7 (262 aa).

The first 30 residues, 1 to 30 (MGPISSSWSFNKFFSIVFVVFAISGEFVAG), serve as a signal peptide directing secretion. Residues 55–167 (GGACGYGNLF…RRVPCQRSGG (113 aa)) enclose the Expansin-like EG45 domain. Disulfide bonds link Cys-58–Cys-86, Cys-89–Cys-162, and Cys-94–Cys-100. Positions 177 to 257 (YWLLIFVMNV…NWSGGKTYKS (81 aa)) constitute an Expansin-like CBD domain.

It belongs to the expansin family. Expansin A subfamily.

The protein localises to the secreted. Its subcellular location is the cell wall. The protein resides in the membrane. In terms of biological role, causes loosening and extension of plant cell walls by disrupting non-covalent bonding between cellulose microfibrils and matrix glucans. No enzymatic activity has been found. The chain is Expansin-A7 (EXPA7) from Arabidopsis thaliana (Mouse-ear cress).